The chain runs to 132 residues: uncharacterized protein (132 aa).

The interval 113–132 (LDPQSPLHSPPLSTSPDSRR) is disordered.

This is an uncharacterized protein from Saccharomyces cerevisiae (strain ATCC 204508 / S288c) (Baker's yeast).